The sequence spans 159 residues: Protein-export protein SecB (159 aa).

The protein belongs to the SecB family. Homotetramer, a dimer of dimers. One homotetramer interacts with 1 SecA dimer.

It is found in the cytoplasm. In terms of biological role, one of the proteins required for the normal export of preproteins out of the cell cytoplasm. It is a molecular chaperone that binds to a subset of precursor proteins, maintaining them in a translocation-competent state. It also specifically binds to its receptor SecA. This Hahella chejuensis (strain KCTC 2396) protein is Protein-export protein SecB.